A 650-amino-acid polypeptide reads, in one-letter code: Threonine--tRNA ligase (650 aa).

The region spanning 1–61 (MIKITFPDGA…DEDGTLEIVM (61 aa)) is the TGS domain. A catalytic region spans residues 242 to 540 (DHRKLGKELD…LIETYKGAFP (299 aa)). 3 residues coordinate Zn(2+): C336, H387, and H517.

It belongs to the class-II aminoacyl-tRNA synthetase family. Homodimer. It depends on Zn(2+) as a cofactor.

Its subcellular location is the cytoplasm. It catalyses the reaction tRNA(Thr) + L-threonine + ATP = L-threonyl-tRNA(Thr) + AMP + diphosphate + H(+). In terms of biological role, catalyzes the attachment of threonine to tRNA(Thr) in a two-step reaction: L-threonine is first activated by ATP to form Thr-AMP and then transferred to the acceptor end of tRNA(Thr). Also edits incorrectly charged L-seryl-tRNA(Thr). The sequence is that of Threonine--tRNA ligase from Streptococcus suis (strain 98HAH33).